A 522-amino-acid chain; its full sequence is F-box only protein 7 (522 aa).

Residues Met1–Pro87 form a ubiquitin-like region. Residues Ser88–Val132 are compositionally biased toward polar residues. The disordered stretch occupies residues Ser88–Pro151. The interval Val91–Thr128 is important for interaction with PINK1. The tract at residues Thr128–Met168 is important for interaction with CDK6. The tract at residues Pro179–Leu323 is important for dimerization and interaction with PSMF1. Residues Val328–Leu374 form the F-box domain. An important for interaction with CDK6 region spans residues Arg380 to Met522. Residues Arg431 and Arg451 each carry the omega-N-methylarginine modification. Residues Arg481–Pro484 carry the RFDP motif motif. A disordered region spans residues Pro484–Met522. Arg518 bears the Asymmetric dimethylarginine mark.

As to quaternary structure, part of the SCF (SKP1-CUL1-F-box) E3 ubiquitin-protein ligase complex SCF(FBXO7) formed of CUL1, SKP1, RBX1 and FBXO7. Interacts via its C-terminal proline-rich region with DLGAP5. Interacts with BIRC2. Interacts with CDK6 and promotes its interaction with D-type cyclin. Interacts (via the N-terminal Ubl domain) with PRKN. Interacts (via N-terminal region) with PINK1. Interacts with PSMF1.

It localises to the cytoplasm. It is found in the nucleus. The protein resides in the mitochondrion. Its subcellular location is the cytosol. The protein operates within protein modification; protein ubiquitination. In terms of biological role, substrate recognition component of a SCF (SKP1-CUL1-F-box protein) E3 ubiquitin-protein ligase complex which mediates the ubiquitination and subsequent proteasomal degradation of target proteins and plays a role in several biological processes such as cell cycle, cell proliferation, or maintenance of chromosome stability. Recognizes and ubiquitinates BIRC2 and the cell cycle regulator DLGAP5. Plays a role downstream of PINK1 in the clearance of damaged mitochondria via selective autophagy (mitophagy) by targeting PRKN to dysfunctional depolarized mitochondria. Promotes MFN1 ubiquitination. Mediates the ubiquitination and proteasomal degradation of UXT isoform 2, thereby impairing the NF-kappa-B signaling pathway. Inhibits NF-kappa-B pathway also by promoting the ubiquitinatioin of TRAF2. Affects the assembly state and activity of the proteasome in the cells including neurons by ubiquitinating the proteasomal subunit PSMA2 via 'Lys-63'-linked polyubiquitin chains. Promotes 'Lys-48'-linked polyubiquitination SIRT7, leading to the hydrogen peroxide-induced cell death. This is F-box only protein 7 (FBXO7) from Bos taurus (Bovine).